Consider the following 256-residue polypeptide: Major prion protein (256 aa).

The signal sequence occupies residues 1 to 24 (MVKSHIGSWILVLFVAMWSDVGLC). Positions 25–233 (KKRPKPGGGW…ESEAYYQRGA (209 aa)) are interaction with GRB2, ERI3 and SYN1. Residues 28–110 (PKPGGGWNTG…QWNKPSKPKT (83 aa)) form a disordered region. Repeat copies occupy residues 54-62 (PQGGGGWGQ), 63-70 (PHGGGWGQ), 71-78 (PHGGGWGQ), 79-86 (PHGGGWGQ), and 87-95 (PHGGGGWGQ). The segment at 54 to 95 (PQGGGGWGQPHGGGWGQPHGGGWGQPHGGGWGQPHGGGGWGQ) is 5 X 8 AA tandem repeats of P-H-G-G-G-W-G-Q. Gly residues predominate over residues 55–97 (QGGGGWGQPHGGGWGQPHGGGWGQPHGGGWGQPHGGGGWGQGG). His64, Gly65, Gly66, His72, Gly73, Gly74, His80, Gly81, Gly82, His88, Gly90, and Gly91 together coordinate Cu(2+). The cysteines at positions 182 and 217 are disulfide-linked. N-linked (GlcNAc...) asparagine glycosylation is found at Asn184 and Asn200. A lipid anchor (GPI-anchor amidated alanine) is attached at Ala233. Positions 234-256 (SVILFSSPPVILLISFLIFLIVG) are cleaved as a propeptide — removed in mature form.

Belongs to the prion family. In terms of assembly, monomer and homodimer. Has a tendency to aggregate into amyloid fibrils containing a cross-beta spine, formed by a steric zipper of superposed beta-strands. Soluble oligomers may represent an intermediate stage on the path to fibril formation. Copper binding may promote oligomerization. Interacts with GRB2, APP, ERI3/PRNPIP and SYN1. Mislocalized cytosolically exposed PrP interacts with MGRN1; this interaction alters MGRN1 subcellular location and causes lysosomal enlargement. Interacts with KIAA1191.

The protein localises to the cell membrane. Its subcellular location is the golgi apparatus. Functionally, its primary physiological function is unclear. Has cytoprotective activity against internal or environmental stresses. May play a role in neuronal development and synaptic plasticity. May be required for neuronal myelin sheath maintenance. May play a role in iron uptake and iron homeostasis. Soluble oligomers are toxic to cultured neuroblastoma cells and induce apoptosis (in vitro). Association with GPC1 (via its heparan sulfate chains) targets PRNP to lipid rafts. Also provides Cu(2+) or Zn(2+) for the ascorbate-mediated GPC1 deaminase degradation of its heparan sulfate side chains. This chain is Major prion protein (PRNP), found in Cervus elaphus (Red deer).